The primary structure comprises 65 residues: Small ribosomal subunit protein eS31 (65 aa).

Zn(2+) contacts are provided by Cys36, Cys39, Cys55, and Cys58. The segment at 36-58 (CPKCGSVMAFHKEPVPRWHCGKC) adopts a C4-type zinc-finger fold.

Belongs to the eukaryotic ribosomal protein eS31 family. Part of the 30S ribosomal subunit. Zn(2+) serves as cofactor.

The chain is Small ribosomal subunit protein eS31 from Pyrobaculum aerophilum (strain ATCC 51768 / DSM 7523 / JCM 9630 / CIP 104966 / NBRC 100827 / IM2).